A 502-amino-acid chain; its full sequence is Serine carboxypeptidase-like 40 (502 aa).

The first 24 residues, M1–S24, serve as a signal peptide directing secretion. Residues N103 and N187 are each glycosylated (N-linked (GlcNAc...) asparagine). 3 disulfide bridges follow: C136-C384, C293-C307, and C331-C352. Residue S229 is part of the active site. N333 and N373 each carry an N-linked (GlcNAc...) asparagine glycan. D420 is a catalytic residue. N436 is a glycosylation site (N-linked (GlcNAc...) asparagine). Residue H473 is part of the active site.

Belongs to the peptidase S10 family. In terms of tissue distribution, expressed in roots, leaves, flowers and siliques.

It is found in the secreted. Its function is as follows. Probable carboxypeptidase. The protein is Serine carboxypeptidase-like 40 (SCPL40) of Arabidopsis thaliana (Mouse-ear cress).